A 198-amino-acid chain; its full sequence is MIIMKEAIIATHNPGKVKEFKEILEPRGYDVKSLAEIGFTEEIEETGHTFEENAIMKAEAVAKAVNKMVIADDSGLSIDNLGGRPGVYSARYAGEQKDDQANIEKVLSELKGIEKEQRTARFRCALAVSIPGEETKTVEGHVEGYIAEEPRGEYGFGYDPIFIVKDKDKTMAELTSDEKNKISHRADALKKLSKLLEA.

Substrate is bound at residue 11 to 16 (THNPGK). Positions 44 and 73 each coordinate Mg(2+). The Proton acceptor role is filled by Asp-73. Substrate-binding positions include Ser-74, 156–159 (FGYD), Lys-179, and 184–185 (HR).

Belongs to the HAM1 NTPase family. Homodimer. The cofactor is Mg(2+).

The enzyme catalyses XTP + H2O = XMP + diphosphate + H(+). The catalysed reaction is dITP + H2O = dIMP + diphosphate + H(+). It carries out the reaction ITP + H2O = IMP + diphosphate + H(+). Functionally, pyrophosphatase that catalyzes the hydrolysis of nucleoside triphosphates to their monophosphate derivatives, with a high preference for the non-canonical purine nucleotides XTP (xanthosine triphosphate), dITP (deoxyinosine triphosphate) and ITP. Seems to function as a house-cleaning enzyme that removes non-canonical purine nucleotides from the nucleotide pool, thus preventing their incorporation into DNA/RNA and avoiding chromosomal lesions. In Bacillus subtilis (strain 168), this protein is dITP/XTP pyrophosphatase (ysnA).